The following is a 256-amino-acid chain: Imidazole glycerol phosphate synthase subunit hisF1 (256 aa).

Active-site residues include D11 and D130.

It belongs to the HisA/HisF family. In terms of assembly, heterodimer of HisH and HisF.

Its subcellular location is the cytoplasm. The catalysed reaction is 5-[(5-phospho-1-deoxy-D-ribulos-1-ylimino)methylamino]-1-(5-phospho-beta-D-ribosyl)imidazole-4-carboxamide + L-glutamine = D-erythro-1-(imidazol-4-yl)glycerol 3-phosphate + 5-amino-1-(5-phospho-beta-D-ribosyl)imidazole-4-carboxamide + L-glutamate + H(+). Its pathway is amino-acid biosynthesis; L-histidine biosynthesis; L-histidine from 5-phospho-alpha-D-ribose 1-diphosphate: step 5/9. In terms of biological role, IGPS catalyzes the conversion of PRFAR and glutamine to IGP, AICAR and glutamate. The HisF subunit catalyzes the cyclization activity that produces IGP and AICAR from PRFAR using the ammonia provided by the HisH subunit. The sequence is that of Imidazole glycerol phosphate synthase subunit hisF1 (hisF1) from Parasynechococcus marenigrum (strain WH8102).